Reading from the N-terminus, the 91-residue chain is Ribonuclease P protein component 4 (91 aa).

4 residues coordinate Zn(2+): Cys48, Cys51, Cys71, and Cys74.

The protein belongs to the eukaryotic/archaeal RNase P protein component 4 family. In terms of assembly, consists of a catalytic RNA component and at least 4-5 protein subunits. The cofactor is Zn(2+).

It localises to the cytoplasm. It carries out the reaction Endonucleolytic cleavage of RNA, removing 5'-extranucleotides from tRNA precursor.. Part of ribonuclease P, a protein complex that generates mature tRNA molecules by cleaving their 5'-ends. This chain is Ribonuclease P protein component 4, found in Picrophilus torridus (strain ATCC 700027 / DSM 9790 / JCM 10055 / NBRC 100828 / KAW 2/3).